The chain runs to 171 residues: NADH-quinone oxidoreductase subunit I (171 aa).

4Fe-4S ferredoxin-type domains follow at residues 41–71 (LTRD…VVKT) and 81–110 (ESFT…LTPD). [4Fe-4S] cluster-binding residues include Cys-51, Cys-54, Cys-57, Cys-61, Cys-90, Cys-93, Cys-96, and Cys-100.

It belongs to the complex I 23 kDa subunit family. NDH-1 is composed of 13 different subunits. Subunits NuoA, H, J, K, L, M, N constitute the membrane sector of the complex. It depends on [4Fe-4S] cluster as a cofactor.

The protein resides in the cell inner membrane. The catalysed reaction is a quinone + NADH + 5 H(+)(in) = a quinol + NAD(+) + 4 H(+)(out). In terms of biological role, NDH-1 shuttles electrons from NADH, via FMN and iron-sulfur (Fe-S) centers, to quinones in the respiratory chain. The immediate electron acceptor for the enzyme in this species is believed to be ubiquinone. Couples the redox reaction to proton translocation (for every two electrons transferred, four hydrogen ions are translocated across the cytoplasmic membrane), and thus conserves the redox energy in a proton gradient. The chain is NADH-quinone oxidoreductase subunit I from Shewanella woodyi (strain ATCC 51908 / MS32).